The sequence spans 304 residues: tRNA-uridine aminocarboxypropyltransferase 1 (304 aa).

An N-acetylserine modification is found at Ser-2. The DXTW signature appears at 206–209 (DSTW).

The protein belongs to the TDD superfamily. DTWD1 family.

It localises to the nucleus. It catalyses the reaction a uridine in tRNA + S-adenosyl-L-methionine = a 3-[(3S)-3-amino-3-carboxypropyl]uridine in tRNA + S-methyl-5'-thioadenosine + H(+). In terms of biological role, catalyzes the formation of 3-(3-amino-3-carboxypropyl)uridine (acp3U) at position 20 in the D-loop of several cytoplasmic tRNAs (acp3U(20)). In Pongo abelii (Sumatran orangutan), this protein is tRNA-uridine aminocarboxypropyltransferase 1.